The chain runs to 527 residues: GMP synthase [glutamine-hydrolyzing] (527 aa).

Residues 19-212 (KIIVLDYGSQ…AFSICGAKGD (194 aa)) enclose the Glutamine amidotransferase type-1 domain. Cys96 acts as the Nucleophile in catalysis. Catalysis depends on residues His186 and Glu188. The GMPS ATP-PPase domain occupies 213-402 (WSMANFVDMQ…LGMPDEVVWR (190 aa)). 240-246 (SGGVDSS) is a binding site for ATP.

In terms of assembly, homodimer.

It catalyses the reaction XMP + L-glutamine + ATP + H2O = GMP + L-glutamate + AMP + diphosphate + 2 H(+). It functions in the pathway purine metabolism; GMP biosynthesis; GMP from XMP (L-Gln route): step 1/1. Catalyzes the synthesis of GMP from XMP. The chain is GMP synthase [glutamine-hydrolyzing] from Streptococcus thermophilus (strain CNRZ 1066).